We begin with the raw amino-acid sequence, 370 residues long: Protein FAM110B (370 aa).

Disordered regions lie at residues 127-151 (SSEGSSSGSGHKHSSRNWPPHRSEA) and 237-256 (KSPEADPVEPACGVSRRPSL). Phosphoserine is present on residues S238 and S301. The tract at residues 317 to 337 (DCEQSQDSNSDLRNDDSANDR) is disordered. The span at 326–335 (SDLRNDDSAN) shows a compositional bias: basic and acidic residues.

Belongs to the FAM110 family. In terms of tissue distribution, detected in thyroid, spleen and testis, and at lower levels in stomach, spinal cord, lymph node, trachea, adrenal gland, prostate, ovary and intestine.

Its subcellular location is the cytoplasm. The protein localises to the cytoskeleton. It is found in the microtubule organizing center. The protein resides in the centrosome. In terms of biological role, may be involved in tumor progression. This Homo sapiens (Human) protein is Protein FAM110B (FAM110B).